A 113-amino-acid chain; its full sequence is Iron-sulfur cluster insertion protein ErpA (113 aa).

Residues Cys-41, Cys-105, and Cys-107 each contribute to the iron-sulfur cluster site.

This sequence belongs to the HesB/IscA family. As to quaternary structure, homodimer. Iron-sulfur cluster is required as a cofactor.

Functionally, required for insertion of 4Fe-4S clusters for at least IspG. The polypeptide is Iron-sulfur cluster insertion protein ErpA (Vibrio parahaemolyticus serotype O3:K6 (strain RIMD 2210633)).